Here is a 434-residue protein sequence, read N- to C-terminus: 26S proteasome regulatory subunit RPN6 (434 aa).

Ser-2 carries the N-acetylserine modification. In terms of domain architecture, PCI spans 235–404; that stretch reads AFSYFFESFE…GWLYVYETPN (170 aa).

The protein belongs to the proteasome subunit S9 family. As to quaternary structure, component of the lid subcomplex of the 19S proteasome regulatory particle complex (also named PA700 complex). The 26S proteasome consists of a 20S proteasome core and two 19S regulatory subunits. N-acetylated by NAT1.

Its function is as follows. Component of the lid subcomplex of the 26S proteasome, a multiprotein complex involved in the ATP-dependent degradation of ubiquitinated proteins. In the complex, RPN6 is required for proteasome assembly. The polypeptide is 26S proteasome regulatory subunit RPN6 (RPN6) (Saccharomyces cerevisiae (strain ATCC 204508 / S288c) (Baker's yeast)).